Reading from the N-terminus, the 290-residue chain is Arylamine N-acetyltransferase 1 (290 aa).

Met1 is modified (N-acetylmethionine). The active-site Acyl-thioester intermediate is Cys68. Ser103 is a binding site for CoA. A substrate-binding site is contributed by 106 to 107 (VH). Catalysis depends on residues His107 and Asp122. Residue Tyr208 coordinates CoA.

Belongs to the arylamine N-acetyltransferase family.

It is found in the cytoplasm. It carries out the reaction an arylamine + acetyl-CoA = an N-acetylarylamine + CoA. Its function is as follows. Participates in the detoxification of a plethora of hydrazine and arylamine drugs. Isoniazid, 2-aminofluorene and anisidine are preferred substrates for NAT-1. No activity with p-aminobenzoic acid (PABA) nor SMZ. The sequence is that of Arylamine N-acetyltransferase 1 (Nat1) from Mus musculus (Mouse).